We begin with the raw amino-acid sequence, 228 residues long: MNIFNPNHDRKAIVIFSGGQDSTTCLFQAIAEYGKENIEAITFQYGQRHAIELEKARTIAQDLGIKQTLIDTSVMKAITHNALMDEQAHIEQKENELPNTFVDGRNALFLLYAAIYAKGQGIQDIITGVCETDFSGYPDCRDVFIKSMNVTLNLAMDYPIPISKTPLMYLTKAQTWQLADELGVLDYVQKHTHTCYEGIEGGCRKCPSCILRNKGLKKYLTQKGRKNV.

16–26 (FSGGQDSTTCL) serves as a coordination point for ATP. 4 residues coordinate Zn(2+): Cys195, Cys203, Cys206, and Cys209.

Belongs to the QueC family. It depends on Zn(2+) as a cofactor.

It catalyses the reaction 7-carboxy-7-deazaguanine + NH4(+) + ATP = 7-cyano-7-deazaguanine + ADP + phosphate + H2O + H(+). It functions in the pathway purine metabolism; 7-cyano-7-deazaguanine biosynthesis. Its function is as follows. Catalyzes the ATP-dependent conversion of 7-carboxy-7-deazaguanine (CDG) to 7-cyano-7-deazaguanine (preQ(0)). The sequence is that of 7-cyano-7-deazaguanine synthase from Haemophilus influenzae (strain ATCC 51907 / DSM 11121 / KW20 / Rd).